Reading from the N-terminus, the 201-residue chain is Female-specific protein transformer (201 aa).

A disordered region spans residues 1–117 (MDADSSSRSP…RSRSRSRTPR (117 aa)). The span at 9–37 (SPRDTRTCARPKEKVPYFADEGRERDRVR) shows a compositional bias: basic and acidic residues. Composition is skewed to basic residues over residues 38 to 62 (NLRHRKTSITRPTTSHRGRPMRARS) and 99 to 115 (KQRRRRSRSRSRSRSRT).

The protein localises to the nucleus speckle. Member of the regulatory pathway controlling female somatic sexual differentiation, regulated by Sxl. Activates dsx female-specific splicing by promoting the formation of a splicing enhancer complex which consists of tra, tra2 and sr proteins. This Drosophila hydei (Fruit fly) protein is Female-specific protein transformer (tra).